The chain runs to 502 residues: Sodium/proline symporter (502 aa).

13 consecutive transmembrane segments (helical) span residues 6–26 (PMLVTFCVYIFGMILIGFIAW), 42–62 (LGPFVTALSAGASDMSGWLLM), 68–88 (IFLSGISESWIAIGLTLGAWI), 127–147 (IISALVILLFFTIYCASGIVA), 163–183 (ALWAGAAATIIYTFIGGFLAV), 192–212 (SLMIFALILTPVMVIVGVGGF), 235–255 (FVAIISLMGWGLGYFGQPHIL), 276–296 (TWMILCLAGAVAVGFFGIAYF), 320–340 (ILFNPWIAGVLLSAILAAVMS), 371–391 (LVWVGRVMVLVVALIAIALAA), 398–418 (LGLVSYAWAGFGAAFGPVVLF), 430–450 (ALAGMIIGAVTVIVWKQYGWL), and 452–472 (LYEIIPGFIFGSLGIVIFSLL).

This sequence belongs to the sodium:solute symporter (SSF) (TC 2.A.21) family.

It is found in the cell inner membrane. It carries out the reaction L-proline(in) + Na(+)(in) = L-proline(out) + Na(+)(out). In terms of biological role, catalyzes the sodium-dependent uptake of extracellular L-proline. The chain is Sodium/proline symporter from Salmonella typhimurium (strain LT2 / SGSC1412 / ATCC 700720).